Consider the following 340-residue polypeptide: tRNA N6-adenosine threonylcarbamoyltransferase (340 aa).

Fe cation contacts are provided by His111 and His115. Substrate is bound by residues 134-138 (LVSGG), Asp167, Gly180, and Asn276. Fe cation is bound at residue Asp304.

The protein belongs to the KAE1 / TsaD family. Fe(2+) is required as a cofactor.

Its subcellular location is the cytoplasm. The catalysed reaction is L-threonylcarbamoyladenylate + adenosine(37) in tRNA = N(6)-L-threonylcarbamoyladenosine(37) in tRNA + AMP + H(+). Functionally, required for the formation of a threonylcarbamoyl group on adenosine at position 37 (t(6)A37) in tRNAs that read codons beginning with adenine. Is involved in the transfer of the threonylcarbamoyl moiety of threonylcarbamoyl-AMP (TC-AMP) to the N6 group of A37, together with TsaE and TsaB. TsaD likely plays a direct catalytic role in this reaction. The chain is tRNA N6-adenosine threonylcarbamoyltransferase from Helicobacter pylori (strain Shi470).